The sequence spans 132 residues: MARKEFRYRGYTLEQLMNMSLEELARLLPARQRRSLRRGLTPEQKKLLRKIRLAKKGKYNKPIRTHCRDMIILPEMVGLTIYVHNGKEFVPVEIKPEMIGHYLGEFAPTRKRVQHGAPGIGATRSSMFVAVK.

Belongs to the universal ribosomal protein uS19 family.

Its function is as follows. Protein S19 forms a complex with S13 that binds strongly to the 16S ribosomal RNA. The sequence is that of Small ribosomal subunit protein uS19 (rps19) from Pyrococcus horikoshii (strain ATCC 700860 / DSM 12428 / JCM 9974 / NBRC 100139 / OT-3).